Consider the following 316-residue polypeptide: MANLKAIRDRIKSVRNTRKITEAMRLVAAAKVRRAQEQVLSTRPFADRLAQVLAGLQQRLQFENVDLPLLQRREVKTVALLVVSGDRGLCGGYNSNVIRRAEQRARELSAQGLDYKFVIVGRKAGQYFQRREQPIEATYSGLEQIPTAQEANDIADELLSLFLSGTVDRVELVYTKFLSLVASNPVVQTLLPLDPQGLASSDDEIFRLTTRGGSFTVEREKLTSEVAPLPRDMIFEQDPAQILSALLPLYLSNQLLRALQEAAASELAARMTAMNSASDNANALVGQLTLVYNKARQAAITQELLEVVAGAEALNG.

It belongs to the ATPase gamma chain family. F-type ATPases have 2 components, CF(1) - the catalytic core - and CF(0) - the membrane proton channel. CF(1) has five subunits: alpha(3), beta(3), gamma(1), delta(1), epsilon(1). CF(0) has three main subunits: a, b and c.

It is found in the cellular thylakoid membrane. In terms of biological role, produces ATP from ADP in the presence of a proton gradient across the membrane. The gamma chain is believed to be important in regulating ATPase activity and the flow of protons through the CF(0) complex. The chain is ATP synthase gamma chain from Synechococcus elongatus (strain ATCC 33912 / PCC 7942 / FACHB-805) (Anacystis nidulans R2).